A 238-amino-acid polypeptide reads, in one-letter code: Probable transcriptional regulatory protein Mmwyl1_2868 (238 aa).

The protein belongs to the TACO1 family.

Its subcellular location is the cytoplasm. The polypeptide is Probable transcriptional regulatory protein Mmwyl1_2868 (Marinomonas sp. (strain MWYL1)).